A 178-amino-acid chain; its full sequence is PRA1 family protein 2 (178 aa).

The Cytoplasmic segment spans residues 1–41; it reads MSEVRLPPLRALDDFVLGSARLAAPDPCDPQRWCHRVINNL. The helical transmembrane segment at 42-62 threads the bilayer; that stretch reads LYYQTNYLLCFGIGLALAGYV. The Extracellular portion of the chain corresponds to 63 to 64; that stretch reads RP. The chain crosses the membrane as a helical span at residues 65 to 85; the sequence is LHTLLSALVVAVALGMLVWAA. Residues 86–96 lie on the Cytoplasmic side of the membrane; it reads ETRAAVRRCRR. A helical transmembrane segment spans residues 97–119; it reads SHPAACLAAVLAVGLLVLWVVGG. Over 120–122 the chain is Extracellular; the sequence is ACT. The chain crosses the membrane as a helical span at residues 123-140; that stretch reads FLLSIAGPVLLILVHASL. Topologically, residues 141–178 are cytoplasmic; it reads RLRNLKNKIENKIESIGLKRTPMGLLLEALGQEQEAGS.

This sequence belongs to the PRA1 family. As to quaternary structure, interacts with CCR5 and GDE1.

It localises to the endosome membrane. Its function is as follows. May be involved in ER/Golgi transport and vesicular traffic. Plays a proapoptotic role in cerulenin-induced neuroblastoma apoptosis. The polypeptide is PRA1 family protein 2 (PRAF2) (Macaca fascicularis (Crab-eating macaque)).